A 71-amino-acid polypeptide reads, in one-letter code: UPF0435 protein SERP1418 (71 aa).

It belongs to the UPF0435 family.

The sequence is that of UPF0435 protein SERP1418 from Staphylococcus epidermidis (strain ATCC 35984 / DSM 28319 / BCRC 17069 / CCUG 31568 / BM 3577 / RP62A).